Here is a 579-residue protein sequence, read N- to C-terminus: MSQSTIKFDLGELTTTQCARLLSKFIRKATLTPEQFEILNTSYDELTEFDDHPLYGGATDHHKDIVGKYDHALLKPAVYQQLRDFATKMESSSWQQTEIDAESDIPTWEQISENERDCVRKVLAFFAVGDTLVKDRIAIFADEFPLPECKDFIDWQTVNEGVHQRVYNNYLDALVKDKIYLADLVNAYKDPEFAPIKKKVDWLGKIISVENDSRGEMVVGQVCTEAIMFAASFAILLKFRAPYMRALVLGNEFIRRDETLHFRFYAELLRLMPDRPSDERIAELLTEATEIELEFAEYVVPEGVKYITKDRLIQHVKANTNQVCEMLDINPIYFDQKGNVLLSPLLYMNTLESEQKINFFEGKATEYNTKQYKVDFNNLFPPVKKMIEFADEEEFIAAIVEGEGLSKDRNKDIVKQQLCLAWDHLSSHDMEGLVDMTWTLKDVHRIAMNHVIFNNGEFSNGYKFTVIDSGKVMYPTYETVEILESAVQGLIDDYNRDFSALDKGVEKFDKDKIRVAARFILDLLYIHPFSDGNGRTARLIMAHLIGKMTTPINREEYLKSIYHYRQTGDVSVFVDQFYR.

Fe cation contacts are provided by D130, E160, and H163. Y167 is an active-site residue. Fe cation-binding residues include E225, E258, and H261. A Fido domain is found at 435–579 (DMTWTLKDVH…VSVFVDQFYR (145 aa)).

The protein belongs to the ribonucleoside diphosphate reductase small chain family. In terms of assembly, heterotetramer composed of a homodimer of the large subunit (R1) and a homodimer of the small subunit (R2). Larger multisubunit protein complex are also active, composed of (R1)n(R2)n. Fe cation serves as cofactor.

It carries out the reaction a 2'-deoxyribonucleoside 5'-diphosphate + [thioredoxin]-disulfide + H2O = a ribonucleoside 5'-diphosphate + [thioredoxin]-dithiol. Ribonucleoside-diphosphate reductase holoenzyme provides the precursors necessary for viral DNA synthesis. Allows virus growth in non-dividing cells. Catalyzes the biosynthesis of deoxyribonucleotides from the corresponding ribonucleotides. The polypeptide is Ribonucleoside-diphosphate reductase small chain (Magallana gigas (Pacific oyster)).